The chain runs to 2595 residues: Glucosylceramide transporter ABCA12 (2595 aa).

Residues 23-43 (PLWTLVLILWPVIIFIILAIT) traverse the membrane as a helical segment. Asn-156, Asn-174, Asn-214, Asn-275, Asn-333, Asn-367, Asn-383, Asn-412, Asn-435, Asn-528, Asn-543, Asn-577, Asn-608, Asn-623, Asn-648, Asn-752, Asn-826, Asn-920, and Asn-963 each carry an N-linked (GlcNAc...) asparagine glycan. Transmembrane regions (helical) follow at residues 1065-1085 (VSYSLPIVLMVAWVVFIAAFV), 1112-1132 (FAWLIESVGFLLVTIVILIII), and 1145-1165 (FILFLYFSDYSFSVIAMSYLI). The N-linked (GlcNAc...) asparagine glycan is linked to Asn-1170. The next 3 helical transmembrane spans lie at 1174–1194 (IAALIGSLIYIIAFFPFIVLV), 1200–1220 (LSYVLKVFMSLLSPTAFSYAS), and 1250–1270 (FGWLCCLILADSFIYFLIAWY). The ABC transporter 1 domain occupies 1346–1577 (VALHGVTKIY…FGDGYHLTLT (232 aa)). Residue 1378 to 1385 (GPNGAGKT) coordinates ATP. N-linked (GlcNAc...) asparagine glycans are attached at residues Asn-1524, Asn-1663, and Asn-1704. A helical membrane pass occupies residues 1747–1767 (LIAQVILPIVFVTTAMGLGTL). Residues Asn-1769, Asn-1819, Asn-1835, Asn-1876, Asn-1921, and Asn-1952 are each glycosylated (N-linked (GlcNAc...) asparagine). Transmembrane regions (helical) follow at residues 1979–1999 (ATISSLIDILVALSILMGYSV), 2035–2055 (FIYDMVFYLVPVAFSIGIIAI), 2072–2092 (LLLLLFGYATFSWMYLLAGLF), and 2103–2123 (VCVNLFFGINSIVSLSVVYFL). N-linked (GlcNAc...) asparagine glycosylation is present at Asn-2178. A helical membrane pass occupies residues 2187–2207 (GAMFVALVSQGTMFFSLRLLI). Asn-2208 and Asn-2223 each carry an N-linked (GlcNAc...) asparagine glycan. The region spanning 2254–2489 (VQLYCLTKTY…FGRGFTVKVH (236 aa)) is the ABC transporter 2 domain. A helical transmembrane segment spans residues 2270 to 2290 (IIAVNNISIGIPAGECFGLLG). Position 2290–2297 (2290–2297 (GVNGAGKT)) interacts with ATP. N-linked (GlcNAc...) asparagine glycans are attached at residues Asn-2318, Asn-2542, and Asn-2547. The tract at residues 2571–2595 (SYETADTSSQGSTISVDSQDDQMES) is disordered. The segment covering 2574 to 2587 (TADTSSQGSTISVD) has biased composition (polar residues).

This sequence belongs to the ABC transporter superfamily. ABCA family. As to quaternary structure, interacts with NR1H2 and ABCA1; this interaction is required for ABCA1 localization to the cell surface and is necessary for its normal activity and stability. In terms of tissue distribution, mainly expressed in the stomach, placenta, testis and fetal brain. Expressed in the upper epidermal layers, mainly the granular layers, of skin. Expressed throughout the normal interfollicular epidermis with prominent expression in the stratum granulosum. Expressed in alpha and beta cells of pancreatic islets.

It localises to the cytoplasmic vesicle. The protein localises to the secretory vesicle membrane. Its subcellular location is the golgi apparatus membrane. It catalyses the reaction ATP + H2O + phospholipidSide 1 = ADP + phosphate + phospholipidSide 2.. The catalysed reaction is a beta-D-glucosylceramide(in) + ATP + H2O = a beta-D-glucosylceramide(out) + ADP + phosphate + H(+). Its function is as follows. Transports lipids such as glucosylceramides from the outer to the inner leaflet of lamellar granules (LGs) membrane, whereby the lipids are finally transported to the keratinocyte periphery via the trans-Golgi network and LGs and released to the apical surface of the granular keratinocytes to form lipid lamellae in the stratum corneum of the epidermis, which is essential for skin barrier function. In the meantime, participates in the transport of the lamellar granules-associated proteolytic enzymes, in turn regulates desquamation and keratinocyte differentiation. Furthermore, is essential for the regulation of cellular cholesterol homeostasis by regulating ABCA1-dependent cholesterol efflux from macrophages through interaction with NR1H2 and ABCA1. Plays pleiotropic roles in regulating glucose stimulated insulin secretion from beta cells, regulating the morphology and fusion of insulin granules, lipid raft abundance and the actin cytoskeleton. Also involved in lung surfactant biogenesis. The polypeptide is Glucosylceramide transporter ABCA12 (Homo sapiens (Human)).